The sequence spans 232 residues: 2-C-methyl-D-erythritol 4-phosphate cytidylyltransferase (232 aa).

The protein belongs to the IspD/TarI cytidylyltransferase family. IspD subfamily.

It catalyses the reaction 2-C-methyl-D-erythritol 4-phosphate + CTP + H(+) = 4-CDP-2-C-methyl-D-erythritol + diphosphate. Its pathway is isoprenoid biosynthesis; isopentenyl diphosphate biosynthesis via DXP pathway; isopentenyl diphosphate from 1-deoxy-D-xylulose 5-phosphate: step 2/6. Functionally, catalyzes the formation of 4-diphosphocytidyl-2-C-methyl-D-erythritol from CTP and 2-C-methyl-D-erythritol 4-phosphate (MEP). The polypeptide is 2-C-methyl-D-erythritol 4-phosphate cytidylyltransferase (Stenotrophomonas maltophilia (strain K279a)).